The primary structure comprises 381 residues: 1-deoxy-D-xylulose 5-phosphate reductoisomerase (381 aa).

Residues T10, G11, S12, I13, G36, K37, N38, and N120 each contribute to the NADPH site. Position 121 (K121) interacts with 1-deoxy-D-xylulose 5-phosphate. E122 lines the NADPH pocket. D146 lines the Mn(2+) pocket. The 1-deoxy-D-xylulose 5-phosphate site is built by S147, E148, S172, and H195. Mn(2+) is bound at residue E148. G201 is a binding site for NADPH. Residues S208, N213, K214, and E217 each coordinate 1-deoxy-D-xylulose 5-phosphate. E217 contributes to the Mn(2+) binding site.

The protein belongs to the DXR family. Mg(2+) is required as a cofactor. Mn(2+) serves as cofactor.

It carries out the reaction 2-C-methyl-D-erythritol 4-phosphate + NADP(+) = 1-deoxy-D-xylulose 5-phosphate + NADPH + H(+). It participates in isoprenoid biosynthesis; isopentenyl diphosphate biosynthesis via DXP pathway; isopentenyl diphosphate from 1-deoxy-D-xylulose 5-phosphate: step 1/6. Catalyzes the NADPH-dependent rearrangement and reduction of 1-deoxy-D-xylulose-5-phosphate (DXP) to 2-C-methyl-D-erythritol 4-phosphate (MEP). The chain is 1-deoxy-D-xylulose 5-phosphate reductoisomerase from Lysinibacillus sphaericus (strain C3-41).